A 108-amino-acid polypeptide reads, in one-letter code: Insertion element IS6110 uncharacterized 12.0 kDa protein (108 aa).

The protein belongs to the transposase 8 family.

This chain is Insertion element IS6110 uncharacterized 12.0 kDa protein, found in Mycobacterium bovis (strain ATCC BAA-935 / AF2122/97).